A 393-amino-acid polypeptide reads, in one-letter code: Succinate--CoA ligase [ADP-forming] subunit beta (393 aa).

The ATP-grasp domain maps to 9–242 (KELFAKHGVP…RAATDPLEWK (234 aa)). ATP is bound by residues Lys45, 52 to 54 (GRG), Ser94, and Glu99. Positions 191 and 211 each coordinate Mg(2+). Substrate-binding positions include Asn262 and 324 to 326 (GIT).

Belongs to the succinate/malate CoA ligase beta subunit family. Heterotetramer of two alpha and two beta subunits. It depends on Mg(2+) as a cofactor.

It carries out the reaction succinate + ATP + CoA = succinyl-CoA + ADP + phosphate. The catalysed reaction is GTP + succinate + CoA = succinyl-CoA + GDP + phosphate. It functions in the pathway carbohydrate metabolism; tricarboxylic acid cycle; succinate from succinyl-CoA (ligase route): step 1/1. Succinyl-CoA synthetase functions in the citric acid cycle (TCA), coupling the hydrolysis of succinyl-CoA to the synthesis of either ATP or GTP and thus represents the only step of substrate-level phosphorylation in the TCA. The beta subunit provides nucleotide specificity of the enzyme and binds the substrate succinate, while the binding sites for coenzyme A and phosphate are found in the alpha subunit. This chain is Succinate--CoA ligase [ADP-forming] subunit beta, found in Mycobacterium leprae (strain Br4923).